We begin with the raw amino-acid sequence, 227 residues long: MDTARVYFGLKPPRTPGAWHESPPSLPPDACRCPRSHRLALKLSCAGLILLVVTLIGMSVLVRVLIQKPSIEKCYVLIQENLNKTTDCSAKLECPQDWLSHRDKCFHVSHVSNTWEEGLVDCDGKGATLMLIQDQEELRFLLDSIKEKYNSFWIGLRYTLPDMNWKWINGSTLNSDVLKITDDTENDSCAAISGDKVTFESCNSDNRWICQKELYHETLSNYVGYGH.

The Cytoplasmic segment spans residues 1–45 (MDTARVYFGLKPPRTPGAWHESPPSLPPDACRCPRSHRLALKLSC). The short motif at 31–34 (CRCP) is the LCK-binding motif element. The helical; Signal-anchor for type II membrane protein transmembrane segment at 46–66 (AGLILLVVTLIGMSVLVRVLI) threads the bilayer. The Extracellular segment spans residues 67–227 (QKPSIEKCYV…TLSNYVGYGH (161 aa)). Residues 93-212 (ECPQDWLSHR…NSDNRWICQK (120 aa)) enclose the C-type lectin domain. 3 disulfide bridges follow: cysteine 94–cysteine 105, cysteine 122–cysteine 210, and cysteine 189–cysteine 202.

In terms of assembly, homodimer; disulfide-linked. Interacts with tyrosine kinase LCK. In terms of tissue distribution, expressed in natural killer cells.

The protein resides in the membrane. Its function is as follows. Plays a stimulatory role on natural killer (NK) cell cytotoxicity. The protein is Killer cell lectin-like receptor subfamily B member 1A (Klrb1a) of Mus musculus (Mouse).